Consider the following 393-residue polypeptide: uncharacterized protein (393 aa).

This is an uncharacterized protein from Methanocaldococcus jannaschii (strain ATCC 43067 / DSM 2661 / JAL-1 / JCM 10045 / NBRC 100440) (Methanococcus jannaschii).